Reading from the N-terminus, the 399-residue chain is MYQPVALFIGLRYMRGRAADRFGRFVSWLSTIGITLGVMALVTVLSVMNGFERELQNNILGLMPQAILSSEHGSLNPQQLPETAVKLDGVNRVAPITTGDVVLQSARSVAVGVMLGIDPAQKDPLTPYLVNVKQTDLEPGKYNVILGEQLASQLGVNRGDQIRVMVPSASQFTPMGRIPSQRLFNVIGTFAANSEVDGYEMLVNIEDASRLMRYPAGNITGWRLWLDEPLKVDSLSQQKLPEGSKWQDWRDRKGELFQAVRMEKNMMGLLLSLIVAVAAFNIITSLGLMVMEKQGEVAILQTQGLTPRQIMMVFMVQGASAGIIGAILGAALGALLASQLNNLMPIIGVLLDGAALPVAIEPLQVIVIALVAMAIALLSTLYPSWRAAATQPAEALRYE.

The next 4 membrane-spanning stretches (helical) occupy residues 25–45 (FVSW…VTVL), 270–290 (LLSL…GLMV), 310–330 (IMMV…ILGA), and 358–378 (VAIE…IALL).

The protein belongs to the ABC-4 integral membrane protein family. LolC/E subfamily.

Its subcellular location is the cell inner membrane. In terms of biological role, part of an ATP-dependent transport system LolCDE responsible for the release of lipoproteins targeted to the outer membrane from the inner membrane. Such a release is dependent of the sorting-signal (absence of an Asp at position 2 of the mature lipoprotein) and of LolA. The protein is Lipoprotein-releasing system transmembrane protein LolC (lolC) of Escherichia coli O157:H7.